Consider the following 146-residue polypeptide: Hemoglobin subunit beta (146 aa).

Position 1 is an N-acetylvaline (Val-1). The Globin domain maps to 2-146; the sequence is HLTAEEKSAV…VANALAHKYH (145 aa). Residue Thr-12 is modified to Phosphothreonine. Position 59 is an N6-acetyllysine (Lys-59). Residue His-63 participates in heme b binding. At Lys-82 the chain carries N6-acetyllysine. Residue His-92 coordinates heme b. Cys-93 is subject to S-nitrosocysteine. Lys-144 is modified (N6-acetyllysine).

Belongs to the globin family. Heterotetramer of two alpha chains and two beta chains. As to expression, red blood cells.

In terms of biological role, involved in oxygen transport from the lung to the various peripheral tissues. The protein is Hemoglobin subunit beta (HBB) of Balaenoptera acutorostrata (Common minke whale).